A 465-amino-acid chain; its full sequence is G1/S-specific cyclin CLN3 (465 aa).

A Cyclin N-terminal domain is found at 44 to 171 (EMLHHLLSVE…HILKSLEWVV (128 aa)).

This sequence belongs to the cyclin family. Interacts with CDC28 and SLA1. Hyperphosphorylated. GRR1 preferentially mediates the degradation of hyperphosphorylated CLN3.

In terms of biological role, G1/S-specific cyclin essential for the control of the cell cycle at the G1/S (start) transition. CLN3 may be an upstream activator of the G1 cyclins which directly catalyze start. Required for budding and for cell cycle progression and morphogenesis in environment-induced hyphae. Degradation is mediated by GRR1. Through binding to CDC28, controls the phosphorylation of SLA1 which regulates cortical actin patch dynamics. This Candida albicans (strain SC5314 / ATCC MYA-2876) (Yeast) protein is G1/S-specific cyclin CLN3 (CLN3).